The sequence spans 398 residues: MAIFRDCSNIGKDRSAEDRRRHRELVEDSIKKNLGSIIAEESIIGKSKDKKIKIPIKGIKEFQFIYGKSKPGVGAGDGNEKRGDKFPGDSQEGKGKGNAGNSEGEEVYETEITIEEVIKYLFDDMNLPDIAKKQLSQLEEKSYRKLGYQHKGIPPRLAKKRSVIEKIKRKQASKRSEDGEDITHDKEYGKERFPFIEEDLRYYRIKEDNKRDYNAVVLCIMDVSGSMDQTKKYLARSFYFLLYQFLRLKYANVDVVFIAHTTTAKEVNEREFFHRGESGGTYISSGYEKALEIISERYSPTNWNIYAFHCSDGDNWSEDNRKAVESANKLCEVCNLFGYGEIVPGYYNIGSTIKNEFLNKIKSKNFAAININKKEDVLPALKKLLDKASDKDEKTGLK.

Disordered stretches follow at residues 1–22 and 68–104; these read MAIF…RRRH and KSKP…NSEG. Composition is skewed to basic and acidic residues over residues 11–22 and 78–95; these read GKDRSAEDRRRH and GNEK…EGKG.

Belongs to the UPF0229 family.

The sequence is that of UPF0229 protein Ccel_0490 from Ruminiclostridium cellulolyticum (strain ATCC 35319 / DSM 5812 / JCM 6584 / H10) (Clostridium cellulolyticum).